Consider the following 159-residue polypeptide: Small ribosomal subunit protein uS17 (159 aa).

This sequence belongs to the universal ribosomal protein uS17 family.

Its subcellular location is the cytoplasm. This chain is Small ribosomal subunit protein uS17 (RPS11), found in Zea mays (Maize).